The primary structure comprises 909 residues: Phosphoenolpyruvate carboxylase (909 aa).

Active-site residues include histidine 151 and lysine 578.

This sequence belongs to the PEPCase type 1 family. The cofactor is Mg(2+).

The catalysed reaction is oxaloacetate + phosphate = phosphoenolpyruvate + hydrogencarbonate. In terms of biological role, forms oxaloacetate, a four-carbon dicarboxylic acid source for the tricarboxylic acid cycle. In Caulobacter vibrioides (strain ATCC 19089 / CIP 103742 / CB 15) (Caulobacter crescentus), this protein is Phosphoenolpyruvate carboxylase.